The chain runs to 420 residues: Melatonin receptor type 1C (420 aa).

At 1 to 34 (MMEVNSTCLDCRTPGTIRTEQDAQDSASQGLTSA) the chain is on the extracellular side. N-linked (GlcNAc...) asparagine glycosylation occurs at asparagine 5. Residues 35–55 (LAVVLIFTIVVDVLGNILVIL) traverse the membrane as a helical segment. The Cytoplasmic portion of the chain corresponds to 56–73 (SVLRNKKLQNAGNLFVVS). Residues 74 to 94 (LSIADLVVAVYPYPVILIAIF) form a helical membrane-spanning segment. Residues 95–106 (QNGWTLGNIHCQ) lie on the Extracellular side of the membrane. Cysteine 105 and cysteine 182 form a disulfide bridge. A helical membrane pass occupies residues 107–127 (ISGFLMGLSVIGSVFNITAIA). At 128–152 (INRYCYICHSLRYDKLYNQRSTWCY) the chain is on the cytoplasmic side. The helical transmembrane segment at 153-173 (LGLTWILTIIAIVPNFFVGSL) threads the bilayer. Topologically, residues 174–192 (QYDPRIFSCTFAQTVSSSY) are extracellular. Residues 193–213 (TITVVVVHFIVPLSVVTFCYL) traverse the membrane as a helical segment. Over 214–245 (RIWVLVIQVKHRVRQDFKQKLTQTDLRNFLTM) the chain is Cytoplasmic. The chain crosses the membrane as a helical span at residues 246–266 (FVVFVLFAVCWAPLNFIGLAV). Topologically, residues 267-279 (AINPFHVAPKIPE) are extracellular. The chain crosses the membrane as a helical span at residues 280-303 (WLFVLSYFMAYFNSCLNAVIYGVL). Residues 304-420 (NQNFRKEYKR…ELCKDGISQR (117 aa)) are Cytoplasmic-facing.

This sequence belongs to the G-protein coupled receptor 1 family. Moderately expressed in dermal melanophores.

Its subcellular location is the cell membrane. Functionally, high affinity receptor for melatonin. Likely to mediate the potent effects of melatonin on pigment aggregation in melanophores. The activity of this receptor is mediated by pertussis toxin sensitive G proteins that inhibit adenylate cyclase activity. This is Melatonin receptor type 1C (mtnr1c) from Xenopus laevis (African clawed frog).